The sequence spans 162 residues: Cytochrome c-type biogenesis protein CcmE (162 aa).

Residues 1-8 are Cytoplasmic-facing; that stretch reads MNPVRKKR. Residues 9–29 traverse the membrane as a helical; Signal-anchor for type II membrane protein segment; the sequence is LIIVLAIVAGVGAAVGLALSA. Topologically, residues 30–162 are periplasmic; it reads LQQNINLFYT…GETSYNQEGK (133 aa). Positions 124 and 128 each coordinate heme. A compositionally biased stretch (basic and acidic residues) spans 139-148; it reads DSGQLKHYEN. A disordered region spans residues 139-162; the sequence is DSGQLKHYENGKAAGETSYNQEGK.

The protein belongs to the CcmE/CycJ family.

The protein localises to the cell inner membrane. Its function is as follows. Heme chaperone required for the biogenesis of c-type cytochromes. Transiently binds heme delivered by CcmC and transfers the heme to apo-cytochromes in a process facilitated by CcmF and CcmH. The chain is Cytochrome c-type biogenesis protein CcmE from Pseudomonas aeruginosa (strain ATCC 15692 / DSM 22644 / CIP 104116 / JCM 14847 / LMG 12228 / 1C / PRS 101 / PAO1).